We begin with the raw amino-acid sequence, 326 residues long: MKNIAIIGASGYTGAQLTALVHAESELSIQGLYVSENSLDKGRALADLYPVYSHIDLALSPLTEEAKAKIVAEADAVVLATEHSVSLHLAAWFYNQGLAVFDLSGAYRFSDVAQYPKWYGFEHEYPEVLAKAVYGLAEWNAKEVAATKMIAVPGCYPTASLTALKPLKNLLTSAYPVINAVSGVTGAGRKAQLHTSFCEVSLTPYGVLGHRHQPEIATQLGQEVIFTPHLGNFKRGILATITVQLKPGTTTADVAAAYSVYDQAPLVTVKQNQFPKVDDVVLTPNCHLGWKFDENSGYLVVASAIDNLMKGAASQALQCIKIHFNL.

The active site involves Cys155.

Belongs to the NAGSA dehydrogenase family. Type 1 subfamily.

The protein resides in the cytoplasm. It carries out the reaction N-acetyl-L-glutamate 5-semialdehyde + phosphate + NADP(+) = N-acetyl-L-glutamyl 5-phosphate + NADPH + H(+). It functions in the pathway amino-acid biosynthesis; L-arginine biosynthesis; N(2)-acetyl-L-ornithine from L-glutamate: step 3/4. Catalyzes the NADPH-dependent reduction of N-acetyl-5-glutamyl phosphate to yield N-acetyl-L-glutamate 5-semialdehyde. In Shewanella sp. (strain MR-4), this protein is N-acetyl-gamma-glutamyl-phosphate reductase.